The sequence spans 467 residues: Peroxisome proliferator-activated receptor alpha (467 aa).

The nuclear receptor DNA-binding region spans 99–173 (NIECRICGDK…VGMSHNAIRF (75 aa)). NR C4-type zinc fingers lie at residues 102–122 (CRICGDKASGYHYGVHACEGC) and 139–161 (CDRSCKIQKKNRNKCQYCRFHKC). In terms of domain architecture, NR LBD spans 239–466 (FVIHDMETLC…PLLQEIYRDM (228 aa)). A required for heterodimerization with RXRA region spans residues 304–433 (DQVTLLKYGV…PKLLQKLADL (130 aa)).

Belongs to the nuclear hormone receptor family. NR1 subfamily. Heterodimer; with RXRA. This heterodimerization is required for DNA binding and transactivation activity. Interacts with NCOA3 coactivator. Interacts with CITED2; the interaction stimulates its transcriptional activity. Also interacts with PPARBP in vitro. Interacts with AKAP13, LPIN1, PRDM16 and coactivator NCOA6. Interacts with ASXL1 and ASXL2. Interacts with PER2. Interacts with SIRT1; the interaction seems to be modulated by NAD(+) levels. Interacts with CRY1 and CRY2. In hepatocytes, interacts with PAQR3 and HUWE1; the interactions promote PPARA poylubiquitination and HUWE1-mediated degradation. Post-translationally, ubiquitinated by E3 ubiquitin-protein ligase HUWE1; leading to proteasomal degradation. In terms of processing, phosphorylated.

Its subcellular location is the nucleus. In terms of biological role, ligand-activated transcription factor. Key regulator of lipid metabolism. Activated by the endogenous ligand 1-palmitoyl-2-oleoyl-sn-glycerol-3-phosphocholine (16:0/18:1-GPC). Activated by oleylethanolamide, a naturally occurring lipid that regulates satiety. Receptor for peroxisome proliferators such as hypolipidemic drugs and fatty acids. Regulates the peroxisomal beta-oxidation pathway of fatty acids. Functions as a transcription activator for the ACOX1 and P450 genes. Transactivation activity requires heterodimerization with RXRA and is antagonized by NR2C2. May be required for the propagation of clock information to metabolic pathways regulated by PER2. This Cavia porcellus (Guinea pig) protein is Peroxisome proliferator-activated receptor alpha (PPARA).